The following is a 325-amino-acid chain: Pyruvate dehydrogenase E1 component subunit beta (325 aa).

E59 provides a ligand contact to thiamine diphosphate.

In terms of assembly, heterodimer of an alpha and a beta chain. Thiamine diphosphate is required as a cofactor.

It catalyses the reaction N(6)-[(R)-lipoyl]-L-lysyl-[protein] + pyruvate + H(+) = N(6)-[(R)-S(8)-acetyldihydrolipoyl]-L-lysyl-[protein] + CO2. Its function is as follows. The pyruvate dehydrogenase complex catalyzes the overall conversion of pyruvate to acetyl-CoA and CO(2). It contains multiple copies of three enzymatic components: pyruvate dehydrogenase (E1), dihydrolipoamide acetyltransferase (E2) and lipoamide dehydrogenase (E3). The protein is Pyruvate dehydrogenase E1 component subunit beta (pdhB) of Rickettsia bellii (strain RML369-C).